A 1133-amino-acid polypeptide reads, in one-letter code: MAPKTKKGCKVTLPEKPVKLASHTRDTTGVSQMFPSSKARTKSLLGDDVFSTMAGLEEADAEVSGISEADPQALLQAMKDLDGMDADILGLKKSNSAPSKKAAKDPGKGELPNHPKPAGGAIPTKKSLPSPSSSGHQNRRFSSEDLEDPLRGLLSYDEGGITKQPPVTQSKTASDKSPSTVRDQGPSIPLTPGDTPIRKKEELLFDDGDDIMATLGFGDSPKAEKRQIGDQEGPRPARSTLDELLGRGMATKLLARPGTGEHREFKLDKKYQRPQDSEDMWGDEDFTFGAYQPTVVSSEGRQSRRQSVSRFFADSGADPKGEPGSKQSPPMASSPIQPRKGGADWLGLKDEDLDLFPASPTREAHRESSVPVTPSVPPPASQHSTPAGLPPSRAKPPTEGAGSPAKASQASKLRASKEEKEDWLSHALSRKKSQGLAREQHAGTSEGLHLAGTAGHPPSGSQPLTSTQGLEHAAAGGSSGTTARERPCVRPGVSGSPVTQNHAASALPTGSPKRGTAPGDLSATEPATCFPSTQKPTEPSVPVQPLLPESLARSLLPSTEYQKQLLAAQVQLQCSPAELQAELLHSQARLAELEAQVRKLELERAQHELLLGSLQQQHQADLELIESAHRSRIKVLETSYQQREERLRRENEELSARYLSQCQEAEQARAELTAQHQRRLAAIAQEKDQEMERLRELQRASILDMRRDHEEQLQRLKLLKDREVDAATSATSHTRSLNSIIHQMEKFSSSLHELSSRVEASHLTTSQERELGIRQRDEQLRALQERLGQQQRDMEEERSRQQEVIGKMEARLNEQSRLLEQERWRVTAEQSKAESMQRALEEQRKVTAQQMAMERAELERAKSALLEEQKSVMLKCGEERRRLAAEWAEFSAQQKLSKERAEREAERALQVDTQREGTLISLAKQAELKIRASELRAEEKQLAAERAALEQERQELRLEKERINATALRVKLRAEEVESMSKVASEKYEEGERALREAQQVQAEQQARLQAVQQQQERLRKQEQHMHQEHLSLAQQRLQLDRARQDLPSSLVGLFPRAQGPAASSQSALMPPAPTTRWCSQPPTGLDPSPLHLHARLALLRHMAEQDRDFLENEQFFLETLKKGSYNLTSHSA.

Disordered stretches follow at residues 89-198 and 211-544; these read LGLK…TPIR and IMAT…VPVQ. Residues 102–113 are compositionally biased toward basic and acidic residues; the sequence is AAKDPGKGELPN. The span at 125–134 shows a compositional bias: low complexity; it reads KKSLPSPSSS. S142 carries the phosphoserine modification. Over residues 165–182 the composition is skewed to polar residues; the sequence is PPVTQSKTASDKSPSTVR. 2 stretches are compositionally biased toward basic and acidic residues: residues 221–245 and 259–276; these read PKAE…DELL and TGEH…RPQD. The segment covering 277-286 has biased composition (acidic residues); that stretch reads SEDMWGDEDF. A compositionally biased stretch (low complexity) spans 295–310; the sequence is VVSSEGRQSRRQSVSR. A compositionally biased stretch (polar residues) spans 325–336; sequence SKQSPPMASSPI. Positions 415–424 are enriched in basic and acidic residues; that stretch reads ASKEEKEDWL. A compositionally biased stretch (polar residues) spans 459 to 469; sequence SGSQPLTSTQG. Over residues 473–482 the composition is skewed to low complexity; that stretch reads AAAGGSSGTT. Coiled-coil stretches lie at residues 577 to 727 and 773 to 870; these read AELQ…VDAA and IRQR…EEQK. Residue K960 forms a Glycyl lysine isopeptide (Lys-Gly) (interchain with G-Cter in SUMO2) linkage. Residues 1062 to 1085 form a disordered region; it reads AASSQSALMPPAPTTRWCSQPPTG.

In terms of assembly, may interact with FAS cytoplasmic domain. Interacts with PARD3. Interacts with TRAPPC14. Present in various epithelial cells (at protein level).

The protein resides in the cytoplasm. The protein localises to the cytoskeleton. It localises to the microtubule organizing center. Its subcellular location is the centrosome. It is found in the centriole. The protein resides in the spindle pole. The protein localises to the cell junction. In terms of biological role, keratin-binding protein required for epithelial cell polarization. Involved in apical junction complex (AJC) assembly via its interaction with PARD3. Required for ciliogenesis. In Homo sapiens (Human), this protein is Fas-binding factor 1 (FBF1).